Reading from the N-terminus, the 366-residue chain is Galactose-1-phosphate uridylyltransferase (366 aa).

S27 is subject to Phosphoserine. Residues C54 and C57 each coordinate Zn(2+). UDP-alpha-D-glucose contacts are provided by residues A63 and 79–80 (ND). Residue H124 participates in Zn(2+) binding. Residue N169 participates in UDP-alpha-D-glucose binding. Zn(2+) is bound at residue H180. H182 serves as the catalytic Tele-UMP-histidine intermediate. Q184 contacts UDP-alpha-D-glucose. Fe cation-binding residues include E198, H297, H314, and H316. UDP-alpha-D-glucose contacts are provided by residues 329–332 (KFLV) and 334–335 (FE).

This sequence belongs to the galactose-1-phosphate uridylyltransferase type 1 family. Homodimer. Zn(2+) serves as cofactor.

It carries out the reaction alpha-D-galactose 1-phosphate + UDP-alpha-D-glucose = alpha-D-glucose 1-phosphate + UDP-alpha-D-galactose. It participates in carbohydrate metabolism; galactose metabolism. This is Galactose-1-phosphate uridylyltransferase (GAL7) from Saccharomyces cerevisiae (strain ATCC 204508 / S288c) (Baker's yeast).